Reading from the N-terminus, the 632-residue chain is Phosphomethylpyrimidine synthase (632 aa).

Substrate is bound by residues Asn-237, Met-266, Tyr-295, His-331, 351–353 (SRG), 392–395 (DGLR), and Glu-431. Residue His-435 participates in Zn(2+) binding. Tyr-458 contacts substrate. Zn(2+) is bound at residue His-499. 3 residues coordinate [4Fe-4S] cluster: Cys-579, Cys-582, and Cys-587.

The protein belongs to the ThiC family. Homodimer. The cofactor is [4Fe-4S] cluster.

The catalysed reaction is 5-amino-1-(5-phospho-beta-D-ribosyl)imidazole + S-adenosyl-L-methionine = 4-amino-2-methyl-5-(phosphooxymethyl)pyrimidine + CO + 5'-deoxyadenosine + formate + L-methionine + 3 H(+). Its pathway is cofactor biosynthesis; thiamine diphosphate biosynthesis. Catalyzes the synthesis of the hydroxymethylpyrimidine phosphate (HMP-P) moiety of thiamine from aminoimidazole ribotide (AIR) in a radical S-adenosyl-L-methionine (SAM)-dependent reaction. In Nitrosomonas eutropha (strain DSM 101675 / C91 / Nm57), this protein is Phosphomethylpyrimidine synthase.